The following is a 229-amino-acid chain: Large ribosomal subunit protein uL1 (229 aa).

It belongs to the universal ribosomal protein uL1 family. Part of the 50S ribosomal subunit.

Binds directly to 23S rRNA. The L1 stalk is quite mobile in the ribosome, and is involved in E site tRNA release. Functionally, protein L1 is also a translational repressor protein, it controls the translation of the L11 operon by binding to its mRNA. The polypeptide is Large ribosomal subunit protein uL1 (Streptococcus equi subsp. zooepidemicus (strain MGCS10565)).